The chain runs to 206 residues: Methyl-coenzyme M reductase operon protein C (206 aa).

As to quaternary structure, MCR is composed of three subunits: alpha, beta, and gamma. The function of proteins C and D is not known.

In Methanosarcina barkeri (strain Fusaro / DSM 804), this protein is Methyl-coenzyme M reductase operon protein C (mcrC).